Consider the following 199-residue polypeptide: Recombination protein RecR (199 aa).

The C4-type zinc finger occupies 57–72 (CSVCGNLTDDDPCNIC). The 97-residue stretch at 80 to 176 (STVLVVEDSK…TVTRLARGLA (97 aa)) folds into the Toprim domain.

It belongs to the RecR family.

Its function is as follows. May play a role in DNA repair. It seems to be involved in an RecBC-independent recombinational process of DNA repair. It may act with RecF and RecO. The sequence is that of Recombination protein RecR from Streptococcus mutans serotype c (strain ATCC 700610 / UA159).